We begin with the raw amino-acid sequence, 113 residues long: MSILSSTQSTILRIPSGLITFLLSKLFLLLRVEPSSASMSISESELLLMGNINDESPKPGKLASAPLASLTNLVFSIDVKGLTLIATTMEDCLVSGTFMLVSIVYSWKENSSS.

This is an uncharacterized protein from Saccharomyces cerevisiae (strain ATCC 204508 / S288c) (Baker's yeast).